The following is a 406-amino-acid chain: Probable 26S proteasome regulatory subunit 10B (406 aa).

191 to 198 (GPPGTGKT) is a binding site for ATP.

The protein belongs to the AAA ATPase family.

The protein localises to the cytoplasm. It localises to the nucleus. Its function is as follows. The 26S proteasome is involved in the ATP-dependent degradation of ubiquitinated proteins. The regulatory (or ATPase) complex confers ATP dependency and substrate specificity to the 26S complex. The chain is Probable 26S proteasome regulatory subunit 10B (rpt-4) from Caenorhabditis elegans.